Reading from the N-terminus, the 57-residue chain is uncharacterized protein (57 aa).

Residues 3-23 traverse the membrane as a helical segment; sequence PLTLLIIIGGVILGNELIISL. Residues 38–57 are disordered; sequence KHKHKTQENYETFASDKKRT.

Its subcellular location is the host membrane. This is an uncharacterized protein from Acidianus bottle-shaped virus (isolate Italy/Pozzuoli) (ABV).